The following is a 531-amino-acid chain: Probable rhamnogalacturonate lyase A (531 aa).

The first 20 residues, 1–20 (MLSKTSLLSLLSLAAGVVNA), serve as a signal peptide directing secretion. Cystine bridges form between cysteine 50-cysteine 93 and cysteine 184-cysteine 193.

Belongs to the polysaccharide lyase 4 family.

The protein resides in the secreted. The enzyme catalyses Endotype eliminative cleavage of L-alpha-rhamnopyranosyl-(1-&gt;4)-alpha-D-galactopyranosyluronic acid bonds of rhamnogalacturonan I domains in ramified hairy regions of pectin leaving L-rhamnopyranose at the reducing end and 4-deoxy-4,5-unsaturated D-galactopyranosyluronic acid at the non-reducing end.. Functionally, pectinolytic enzymes consist of four classes of enzymes: pectin lyase, polygalacturonase, pectin methylesterase and rhamnogalacturonase. Degrades the rhamnogalacturonan I (RG-I) backbone of pectin. In Aspergillus niger (strain ATCC MYA-4892 / CBS 513.88 / FGSC A1513), this protein is Probable rhamnogalacturonate lyase A (rglA).